A 462-amino-acid chain; its full sequence is Metal cation symporter ZIP14 (462 aa).

The N-terminal stretch at 1-16 (MPLLLLSALLPFSLMA) is a signal peptide. The Extracellular segment spans residues 17 to 138 (GPTPSTGKEL…PSPGEVWGYG (122 aa)). N-linked (GlcNAc...) asparagine glycans are attached at residues Asn-42, Asn-68, Asn-83, and Asn-119. The chain crosses the membrane as a helical span at residues 139–159 (FLCVTVISLCSLFGAGVVPFM). Over 160-167 (KKACYKRL) the chain is Cytoplasmic. A helical membrane pass occupies residues 168–188 (LLFCIALAIGTLFSNALFQLI). Residues 189 to 201 (PEAFGFNPLEDSY) lie on the Extracellular side of the membrane. Residues 202–222 (VFTSSVIFGGFYLFFFTEKVL) traverse the membrane as a helical segment. The Cytoplasmic portion of the chain corresponds to 223 to 322 (KMMLKQKHEH…SDGLHNFIDG (100 aa)). The HHHGHXHX-motif motif lies at 230 to 237 (HEHGHSHY). The segment at 235–285 (SHYSADTSKRDAEEGVTEKLQNGDLDHMIPPPHGSESDLRGDEKAVQQQDL) is disordered. Composition is skewed to basic and acidic residues over residues 241–251 (TSKRDAEEGVT) and 269–279 (SESDLRGDEKA). Residues 323-343 (LAIGASFTVSVFQGVSTSIAI) form a helical membrane-spanning segment. Residues 344 to 367 (LCEEFPHELGDFVILLNAGMSIPQ) are Extracellular-facing. An XEXPHE-motif motif is present at residues 346 to 351 (EEFPHE). Residues 368–388 (ALFFNFLSACCCYLGLAFGIL) form a helical membrane-spanning segment. Residues 389-396 (AGSHFSSN) lie on the Cytoplasmic side of the membrane. Residues 397–417 (WIFALAGGMFLYIALSDMFPE) form a helical membrane-spanning segment. Residues 418–431 (MNEVSKEDEEGGRA) lie on the Extracellular side of the membrane. The chain crosses the membrane as a helical span at residues 432–452 (FSAFMIQNAGLLTGFAIMLLL). The Cytoplasmic segment spans residues 453-462 (TTFSGQIQLG).

Belongs to the ZIP transporter (TC 2.A.5) family. In terms of assembly, homotrimer.

The protein localises to the cell membrane. Its subcellular location is the apical cell membrane. The protein resides in the basolateral cell membrane. It is found in the early endosome membrane. It localises to the late endosome membrane. The protein localises to the lysosome membrane. The enzyme catalyses Zn(2+)(out) + 2 hydrogencarbonate(out) = Zn(2+)(in) + 2 hydrogencarbonate(in). The catalysed reaction is Mn(2+)(out) + 2 hydrogencarbonate(out) = Mn(2+)(in) + 2 hydrogencarbonate(in). It catalyses the reaction Fe(2+)(out) + 2 hydrogencarbonate(out) = Fe(2+)(in) + 2 hydrogencarbonate(in). It carries out the reaction Cd(2+)(out) + 2 hydrogencarbonate(out) = Cd(2+)(in) + 2 hydrogencarbonate(in). Electroneutral transporter of the plasma membrane mediating the cellular uptake of the divalent metal cations zinc, manganese and iron that are important for tissue homeostasis, metabolism, development and immunity. Functions as an energy-dependent symporter, transporting through the membranes an electroneutral complex composed of a divalent metal cation and two bicarbonate anions. Beside these endogenous cellular substrates, can also import cadmium a non-essential metal which is cytotoxic and carcinogenic. This Xenopus tropicalis (Western clawed frog) protein is Metal cation symporter ZIP14.